Consider the following 307-residue polypeptide: tRNA dimethylallyltransferase (307 aa).

8–15 (GPTGSGKS) serves as a coordination point for ATP. 10–15 (TGSGKS) is a binding site for substrate. Residues 33 to 36 (DSLQ) form an interaction with substrate tRNA region.

Belongs to the IPP transferase family. In terms of assembly, monomer. Mg(2+) is required as a cofactor.

It carries out the reaction adenosine(37) in tRNA + dimethylallyl diphosphate = N(6)-dimethylallyladenosine(37) in tRNA + diphosphate. Its function is as follows. Catalyzes the transfer of a dimethylallyl group onto the adenine at position 37 in tRNAs that read codons beginning with uridine, leading to the formation of N6-(dimethylallyl)adenosine (i(6)A). This is tRNA dimethylallyltransferase from Solibacter usitatus (strain Ellin6076).